The chain runs to 310 residues: Nodulation protein D 2 (310 aa).

Residues 6–63 (LDLNLLVALDALMTERKLTAAARRVKLSQPAMSAAIARLRTYFGDELFSMQGRELIPT) enclose the HTH lysR-type domain. A DNA-binding region (H-T-H motif) is located at residues 23 to 42 (LTAAARRVKLSQPAMSAAIA).

The protein belongs to the LysR transcriptional regulatory family.

In terms of biological role, nodD regulates the expression of the nodABCFE genes which encode other nodulation proteins. NodD is also a negative regulator of its own expression. Binds flavonoids as inducers. The sequence is that of Nodulation protein D 2 (nodD2) from Rhizobium meliloti (strain 1021) (Ensifer meliloti).